Here is a 314-residue protein sequence, read N- to C-terminus: Coproporphyrin III ferrochelatase (314 aa).

Fe(2+) contacts are provided by H186 and E268.

Belongs to the ferrochelatase family.

It localises to the cytoplasm. The catalysed reaction is Fe-coproporphyrin III + 2 H(+) = coproporphyrin III + Fe(2+). Its pathway is porphyrin-containing compound metabolism; protoheme biosynthesis. Functionally, involved in coproporphyrin-dependent heme b biosynthesis. Catalyzes the insertion of ferrous iron into coproporphyrin III to form Fe-coproporphyrin III. The sequence is that of Coproporphyrin III ferrochelatase from Lactococcus lactis subsp. lactis (strain IL1403) (Streptococcus lactis).